The chain runs to 86 residues: Small ribosomal subunit protein bS20 (86 aa).

It belongs to the bacterial ribosomal protein bS20 family.

Its function is as follows. Binds directly to 16S ribosomal RNA. This chain is Small ribosomal subunit protein bS20, found in Bifidobacterium longum subsp. infantis (strain ATCC 15697 / DSM 20088 / JCM 1222 / NCTC 11817 / S12).